The sequence spans 181 residues: ATP-dependent protease subunit HslV (181 aa).

T7 is an active-site residue. Residues A162, C165, and T168 each contribute to the Na(+) site.

It belongs to the peptidase T1B family. HslV subfamily. As to quaternary structure, a double ring-shaped homohexamer of HslV is capped on each side by a ring-shaped HslU homohexamer. The assembly of the HslU/HslV complex is dependent on binding of ATP.

The protein resides in the cytoplasm. It catalyses the reaction ATP-dependent cleavage of peptide bonds with broad specificity.. Allosterically activated by HslU binding. Protease subunit of a proteasome-like degradation complex believed to be a general protein degrading machinery. This chain is ATP-dependent protease subunit HslV, found in Coxiella burnetii (strain RSA 493 / Nine Mile phase I).